The sequence spans 276 residues: MESMSELAPRCLLFPLLLLLPLLLLPAPKLGPSPAGAEETDWVRLPSKCEVCKYVAVELKSAFEETGKTKEVIDTGYGILDGKGSGVKYTKSDLRLIEVTETICKRLLDYSLHKERTGSNRFAKGMSETFETLHNLVHKGVKVVMDIPYELWNETSAEVADLKKQCDVLVEEFEEVIEDWYRNHQEEDLTEFLCANHVLKGKDTSCLAERWSGKKGDIASLGGKKSKKKRSGVKGSSSGSSKQRKELGGLGEDANAEEEEGVQKASPLPHSPPDEL.

The N-terminal stretch at 1–26 (MESMSELAPRCLLFPLLLLLPLLLLP) is a signal peptide. A Saposin B-type domain is found at 47–269 (SKCEVCKYVA…EGVQKASPLP (223 aa)). Intrachain disulfides connect C49–C206, C52–C194, and C104–C166. N153 carries an N-linked (GlcNAc...) asparagine glycan. A coiled-coil region spans residues 153-179 (NETSAEVADLKKQCDVLVEEFEEVIED). Residues 218 to 276 (IASLGGKKSKKKRSGVKGSSSGSSKQRKELGGLGEDANAEEEEGVQKASPLPHSPPDEL) are disordered.

Belongs to the canopy family. In terms of assembly, interacts with HSP90B1; this interaction is disrupted in the presence of ATP. Interacts with TLR1, TLR2, TLR4 and TLR9. Strongest interaction with TLR4.

It is found in the endoplasmic reticulum. Functionally, toll-like receptor (TLR)-specific co-chaperone for HSP90B1. Required for proper TLR folding, except that of TLR3, and hence controls TLR exit from the endoplasmic reticulum. Consequently, required for both innate and adaptive immune responses. The chain is Protein canopy homolog 3 (Cnpy3) from Mus musculus (Mouse).